A 343-amino-acid chain; its full sequence is Dual oxidase maturation factor 1 (343 aa).

Topologically, residues 1-24 (MATLGHTFPFYAGPKPTFPMDTTL) are extracellular. A helical membrane pass occupies residues 25–45 (ASIIMIFLTALATFIVILPGI). Residues 46–51 (RGKTRL) lie on the Cytoplasmic side of the membrane. The chain crosses the membrane as a helical span at residues 52 to 72 (FWLLRVVTSLFIGAAILAVNF). The Extracellular portion of the chain corresponds to 73-183 (SSEWSVGQVS…RLAGHYTSAM (111 aa)). 3 N-linked (GlcNAc...) asparagine glycosylation sites follow: Asn-84, Asn-109, and Asn-121. Residues 184 to 204 (LWVAFLCWLLANVMLSMPVLV) traverse the membrane as a helical segment. The Cytoplasmic segment spans residues 205–206 (YG). A helical transmembrane segment spans residues 207-227 (GYMLLATGIFQLLALLFFSMA). The Extracellular segment spans residues 228-249 (TSLTSPCPLHLGASVLHTHHGP). A helical transmembrane segment spans residues 250–270 (AFWITLTTGLLCVLLGLAMAV). At 271-343 (AHRMQPHRLK…AHPKDPDCAL (73 aa)) the chain is on the cytoplasmic side. Positions 306-343 (RYRSMADSPKSQDIPLSEASSTKAYCKEAHPKDPDCAL) are disordered. The segment covering 330-343 (YCKEAHPKDPDCAL) has biased composition (basic and acidic residues).

Belongs to the DUOXA family. In terms of assembly, may interact with NUMB. As to expression, specifically expressed in thyroid gland. Also detected in esophagus.

The protein resides in the membrane. In terms of biological role, may be required for the maturation and the transport from the endoplasmic reticulum to the plasma membrane of functional DUOX1. The sequence is that of Dual oxidase maturation factor 1 (DUOXA1) from Homo sapiens (Human).